The sequence spans 313 residues: Porphobilinogen deaminase (313 aa).

C242 bears the S-(dipyrrolylmethanemethyl)cysteine mark.

Belongs to the HMBS family. Monomer. The cofactor is dipyrromethane.

The enzyme catalyses 4 porphobilinogen + H2O = hydroxymethylbilane + 4 NH4(+). The protein operates within porphyrin-containing compound metabolism; protoporphyrin-IX biosynthesis; coproporphyrinogen-III from 5-aminolevulinate: step 2/4. In terms of biological role, tetrapolymerization of the monopyrrole PBG into the hydroxymethylbilane pre-uroporphyrinogen in several discrete steps. The sequence is that of Porphobilinogen deaminase from Pseudomonas putida (strain ATCC 700007 / DSM 6899 / JCM 31910 / BCRC 17059 / LMG 24140 / F1).